We begin with the raw amino-acid sequence, 86 residues long: Exodeoxyribonuclease 7 small subunit (86 aa).

Residues 1–26 form a disordered region; it reads MQDELFETEKAPQKNTKNAKNAPKKS.

It belongs to the XseB family. Heterooligomer composed of large and small subunits.

It is found in the cytoplasm. It carries out the reaction Exonucleolytic cleavage in either 5'- to 3'- or 3'- to 5'-direction to yield nucleoside 5'-phosphates.. Its function is as follows. Bidirectionally degrades single-stranded DNA into large acid-insoluble oligonucleotides, which are then degraded further into small acid-soluble oligonucleotides. This is Exodeoxyribonuclease 7 small subunit from Helicobacter pylori (strain Shi470).